The following is a 115-amino-acid chain: Probable non-functional T cell receptor beta variable 7-1 (115 aa).

A signal peptide spans 1-21 (MGTRLLCWAAICLLGADHTGA). One can recognise an Ig-like domain in the interval 22–115 (GVSQSLRHKV…LAVYLCASSS (94 aa)).

Most probably, the alpha-beta TR is not assembled due to incorrect folding of the beta chain. Alpha-beta TR is a heterodimer composed of an alpha and beta chain; disulfide-linked. The alpha-beta TR is associated with the transmembrane signaling CD3 coreceptor proteins to form the TR-CD3 (TcR or TCR). The assembly of alpha-beta TR heterodimers with CD3 occurs in the endoplasmic reticulum where a single alpha-beta TR heterodimer associates with one CD3D-CD3E heterodimer, one CD3G-CD3E heterodimer and one CD247 homodimer forming a stable octameric structure. CD3D-CD3E and CD3G-CD3E heterodimers preferentially associate with TR alpha and TR beta chains, respectively. The association of the CD247 homodimer is the last step of TcR assembly in the endoplasmic reticulum and is required for transport to the cell surface.

The protein localises to the cell membrane. Its function is as follows. Probable non-functional open reading frame (ORF) of V region of the variable domain of T cell receptor (TR) beta chain. Non-functional ORF generally cannot participate in the synthesis of a productive T cell receptor (TR) chain due to altered V-(D)-J or switch recombination and/or splicing site (at mRNA level) and/or conserved amino acid change (protein level). Alpha-beta T cell receptors are antigen specific receptors which are essential to the immune response and are present on the cell surface of T lymphocytes. Recognize peptide-major histocompatibility (MH) (pMH) complexes that are displayed by antigen presenting cells (APC), a prerequisite for efficient T cell adaptive immunity against pathogens. Binding of alpha-beta TR to pMH complex initiates TR-CD3 clustering on the cell surface and intracellular activation of LCK that phosphorylates the ITAM motifs of CD3G, CD3D, CD3E and CD247 enabling the recruitment of ZAP70. In turn ZAP70 phosphorylates LAT, which recruits numerous signaling molecules to form the LAT signalosome. The LAT signalosome propagates signal branching to three major signaling pathways, the calcium, the mitogen-activated protein kinase (MAPK) kinase and the nuclear factor NF-kappa-B (NF-kB) pathways, leading to the mobilization of transcription factors that are critical for gene expression and essential for T cell growth and differentiation. The T cell repertoire is generated in the thymus, by V-(D)-J rearrangement. This repertoire is then shaped by intrathymic selection events to generate a peripheral T cell pool of self-MH restricted, non-autoaggressive T cells. Post-thymic interaction of alpha-beta TR with the pMH complexes shapes TR structural and functional avidity. The sequence is that of Probable non-functional T cell receptor beta variable 7-1 from Homo sapiens (Human).